Consider the following 373-residue polypeptide: Citrate synthase (373 aa).

Catalysis depends on residues histidine 262 and aspartate 314.

It belongs to the citrate synthase family. As to quaternary structure, homohexamer.

It catalyses the reaction oxaloacetate + acetyl-CoA + H2O = citrate + CoA + H(+). The protein operates within carbohydrate metabolism; tricarboxylic acid cycle; isocitrate from oxaloacetate: step 1/2. The polypeptide is Citrate synthase (ctsA) (Heyndrickxia coagulans (Weizmannia coagulans)).